The sequence spans 87 residues: Acyl carrier protein TtuC (87 aa).

Residues 11 to 87 enclose the Carrier domain; the sequence is ITAEDVQQWL…HALSQFIAAK (77 aa). S48 carries the post-translational modification O-(pantetheine 4'-phosphoryl)serine.

Pantetheine 4'-phosphate serves as cofactor.

In terms of biological role, carrier protein likely involved in the biosynthesis of a polyyne metabolite. Accepts as substrate the activated form of decanoic acid from TtuA. This chain is Acyl carrier protein TtuC, found in Teredinibacter turnerae (strain ATCC 39867 / T7901).